A 423-amino-acid polypeptide reads, in one-letter code: Imidazolonepropionase (423 aa).

2 residues coordinate Fe(3+): histidine 80 and histidine 82. Zn(2+)-binding residues include histidine 80 and histidine 82. 4-imidazolone-5-propanoate is bound by residues arginine 89, tyrosine 152, and histidine 185. Residue tyrosine 152 participates in N-formimidoyl-L-glutamate binding. Histidine 250 lines the Fe(3+) pocket. Residue histidine 250 participates in Zn(2+) binding. Glutamine 253 is a 4-imidazolone-5-propanoate binding site. Aspartate 325 contacts Fe(3+). Position 325 (aspartate 325) interacts with Zn(2+). Asparagine 327 and glycine 329 together coordinate N-formimidoyl-L-glutamate. Threonine 330 contributes to the 4-imidazolone-5-propanoate binding site.

Belongs to the metallo-dependent hydrolases superfamily. HutI family. Requires Zn(2+) as cofactor. Fe(3+) serves as cofactor.

The protein resides in the cytoplasm. It catalyses the reaction 4-imidazolone-5-propanoate + H2O = N-formimidoyl-L-glutamate. It functions in the pathway amino-acid degradation; L-histidine degradation into L-glutamate; N-formimidoyl-L-glutamate from L-histidine: step 3/3. Catalyzes the hydrolytic cleavage of the carbon-nitrogen bond in imidazolone-5-propanoate to yield N-formimidoyl-L-glutamate. It is the third step in the universal histidine degradation pathway. The sequence is that of Imidazolonepropionase from Cupriavidus pinatubonensis (strain JMP 134 / LMG 1197) (Cupriavidus necator (strain JMP 134)).